We begin with the raw amino-acid sequence, 612 residues long: Dihydroxy-acid dehydratase (612 aa).

Aspartate 81 is a binding site for Mg(2+). Cysteine 122 serves as a coordination point for [2Fe-2S] cluster. Mg(2+)-binding residues include aspartate 123 and lysine 124. Residue lysine 124 is modified to N6-carboxylysine. Cysteine 193 lines the [2Fe-2S] cluster pocket. A Mg(2+)-binding site is contributed by glutamate 489. The active-site Proton acceptor is the serine 515.

The protein belongs to the IlvD/Edd family. In terms of assembly, homodimer. [2Fe-2S] cluster is required as a cofactor. Mg(2+) serves as cofactor.

It catalyses the reaction (2R)-2,3-dihydroxy-3-methylbutanoate = 3-methyl-2-oxobutanoate + H2O. The catalysed reaction is (2R,3R)-2,3-dihydroxy-3-methylpentanoate = (S)-3-methyl-2-oxopentanoate + H2O. Its pathway is amino-acid biosynthesis; L-isoleucine biosynthesis; L-isoleucine from 2-oxobutanoate: step 3/4. It functions in the pathway amino-acid biosynthesis; L-valine biosynthesis; L-valine from pyruvate: step 3/4. Its function is as follows. Functions in the biosynthesis of branched-chain amino acids. Catalyzes the dehydration of (2R,3R)-2,3-dihydroxy-3-methylpentanoate (2,3-dihydroxy-3-methylvalerate) into 2-oxo-3-methylpentanoate (2-oxo-3-methylvalerate) and of (2R)-2,3-dihydroxy-3-methylbutanoate (2,3-dihydroxyisovalerate) into 2-oxo-3-methylbutanoate (2-oxoisovalerate), the penultimate precursor to L-isoleucine and L-valine, respectively. This is Dihydroxy-acid dehydratase from Azotobacter vinelandii (strain DJ / ATCC BAA-1303).